The sequence spans 117 residues: Immunoglobulin kappa variable 1-39 (117 aa).

Residues 1 to 22 (MDMRVPAQLLGLLLLWLRGARC) form the signal peptide. Residues 23–45 (DIQMTQSPSSLSASVGDRVTITC) form a framework-1 region. In terms of domain architecture, Ig-like spans 24–117 (IQMTQSPSSL…YYCQQSYSTP (94 aa)). Cys45 and Cys110 form a disulfide bridge. Residues 46–56 (RASQSISSYLN) are complementarity-determining-1. The interval 57 to 71 (WYQQKPGKAPKLLIY) is framework-2. Positions 72-78 (AASSLQS) are complementarity-determining-2. The interval 79 to 110 (GVPSRFSGSGSGTDFTLTISSLQPEDFATYYC) is framework-3. Residues 111-117 (QQSYSTP) are complementarity-determining-3.

Immunoglobulins are composed of two identical heavy chains and two identical light chains; disulfide-linked.

It is found in the secreted. The protein resides in the cell membrane. V region of the variable domain of immunoglobulin light chains that participates in the antigen recognition. Immunoglobulins, also known as antibodies, are membrane-bound or secreted glycoproteins produced by B lymphocytes. In the recognition phase of humoral immunity, the membrane-bound immunoglobulins serve as receptors which, upon binding of a specific antigen, trigger the clonal expansion and differentiation of B lymphocytes into immunoglobulins-secreting plasma cells. Secreted immunoglobulins mediate the effector phase of humoral immunity, which results in the elimination of bound antigens. The antigen binding site is formed by the variable domain of one heavy chain, together with that of its associated light chain. Thus, each immunoglobulin has two antigen binding sites with remarkable affinity for a particular antigen. The variable domains are assembled by a process called V-(D)-J rearrangement and can then be subjected to somatic hypermutations which, after exposure to antigen and selection, allow affinity maturation for a particular antigen. The protein is Immunoglobulin kappa variable 1-39 of Homo sapiens (Human).